Here is a 585-residue protein sequence, read N- to C-terminus: Eukaryotic translation initiation factor 3 subunit D (585 aa).

Positions 110–130 (GGGTVFRGRGQRGVGQRGGRA) are enriched in gly residues. The tract at residues 110–152 (GGGTVFRGRGQRGVGQRGGRAGFQRVGAGRGQGGDRYYDNRSA) is disordered. The segment at 300 to 314 (SIDLVTVNENAADAP) is RNA gate. The segment at 560 to 585 (VPPNTFEEDDEAAEEQEEKAEDESEE) is disordered. Acidic residues predominate over residues 565 to 585 (FEEDDEAAEEQEEKAEDESEE).

This sequence belongs to the eIF-3 subunit D family. Component of the eukaryotic translation initiation factor 3 (eIF-3) complex.

The protein resides in the cytoplasm. Functionally, mRNA cap-binding component of the eukaryotic translation initiation factor 3 (eIF-3) complex, which is involved in protein synthesis of a specialized repertoire of mRNAs and, together with other initiation factors, stimulates binding of mRNA and methionyl-tRNAi to the 40S ribosome. The eIF-3 complex specifically targets and initiates translation of a subset of mRNAs involved in cell proliferation. In the eIF-3 complex, eif3d specifically recognizes and binds the 7-methylguanosine cap of a subset of mRNAs. In Aspergillus fumigatus (strain CBS 144.89 / FGSC A1163 / CEA10) (Neosartorya fumigata), this protein is Eukaryotic translation initiation factor 3 subunit D.